We begin with the raw amino-acid sequence, 678 residues long: Putative pentatricopeptide repeat-containing protein At3g18840 (678 aa).

16 PPR repeats span residues 22 to 56, 57 to 84, 85 to 116, 124 to 158, 159 to 190, 192 to 222, 224 to 258, 259 to 293, 294 to 324, 325 to 359, 360 to 390, 392 to 426, 427 to 457, 458 to 492, 493 to 528, and 529 to 563; these read TAVSSNQLVNLYSKSGLLREARNVFDEMLERNVYS, WNAVIAAYVKFNNVKEARELFESDNCER, DLITYNTLLSGFAKTDGCESEAIEMFGEMHRK, DDFTVTTMVKLSAKLTNVFYGEQLHGVLVKTGNDG, TKFAVSSLIHMYSKCGKFKEVCNIFNGSCVEF, DSVARNAMIAAYCREGDIDKALSVFWRNPEL, DTISWNTLIAGYAQNGYEEEALKMAVSMEENGLKW, DEHSFGAVLNVLSSLKSLKIGKEVHARVLKNGSYS, NKFVSSGIVDVYCKCGNMKYAESAHLLYGFG, NLYSASSMIVGYSSQGKMVEAKRLFDSLSEKNLVV, WTAMFLGYLNLRQPDSVLELARAFIANETNT, DSLVMVSVLGACSLQAYMEPGKEIHGHSLRTGILM, DKKLVTAFVDMYSKCGNVEYAERIFDSSFER, DTVMYNAMIAGCAHHGHEAKSFQHFEDMTEGGFKP, DEITFMALLSACRHRGLVLEGEKYFKSMIEAYNISP, and ETGHYTCMIDLYGKAYRLDKAIELMEGIDQVEKDA. Residues 565–640 form a type E motif region; it reads ILGAFLNACS…FSGCSWANID (76 aa). The tract at residues 641–671 is type E(+) motif; that stretch reads KQFHMFTSSDISHYETEAIYAMLHFVTKDLS.

Belongs to the PPR family. PCMP-E subfamily.

The chain is Putative pentatricopeptide repeat-containing protein At3g18840 (PCMP-E92) from Arabidopsis thaliana (Mouse-ear cress).